A 172-amino-acid chain; its full sequence is Keratin-associated protein 13-3 (172 aa).

Tandem repeats lie at residues cysteine 46–glycine 55, cysteine 56–serine 65, cysteine 66–proline 75, cysteine 76–threonine 85, and cysteine 92–glycine 101. The interval cysteine 46–glycine 101 is 5 X 10 AA approximate repeats.

This sequence belongs to the PMG family. As to quaternary structure, interacts with hair keratins.

In terms of biological role, in the hair cortex, hair keratin intermediate filaments are embedded in an interfilamentous matrix, consisting of hair keratin-associated proteins (KRTAP), which are essential for the formation of a rigid and resistant hair shaft through their extensive disulfide bond cross-linking with abundant cysteine residues of hair keratins. The matrix proteins include the high-sulfur and high-glycine-tyrosine keratins. The polypeptide is Keratin-associated protein 13-3 (KRTAP13-3) (Homo sapiens (Human)).